Consider the following 174-residue polypeptide: MRPVAPEKDGPRVNEEIRIREVQLIDQDGQNRGVVAIRDALTLAQEAGLDLVEISPNSAPPVCKILDYGRFKYQNQKKASEARKKQKVVEVKEIKLRPGIDTHDYEVKMRSMERFFEEGDKVKVTLRFRGREMAHQDIGFKLLQKLKEDVAAIAKVEAEPMLEGRQMIMILSPR.

It belongs to the IF-3 family. As to quaternary structure, monomer.

The protein resides in the cytoplasm. IF-3 binds to the 30S ribosomal subunit and shifts the equilibrium between 70S ribosomes and their 50S and 30S subunits in favor of the free subunits, thus enhancing the availability of 30S subunits on which protein synthesis initiation begins. The chain is Translation initiation factor IF-3 from Xanthobacter autotrophicus (strain ATCC BAA-1158 / Py2).